A 256-amino-acid polypeptide reads, in one-letter code: Thiazole synthase (256 aa).

K95 functions as the Schiff-base intermediate with DXP in the catalytic mechanism. 1-deoxy-D-xylulose 5-phosphate is bound by residues G156, 182 to 183 (AG), and 204 to 205 (NT).

The protein belongs to the ThiG family. In terms of assembly, homotetramer. Forms heterodimers with either ThiH or ThiS.

The protein localises to the cytoplasm. It catalyses the reaction [ThiS sulfur-carrier protein]-C-terminal-Gly-aminoethanethioate + 2-iminoacetate + 1-deoxy-D-xylulose 5-phosphate = [ThiS sulfur-carrier protein]-C-terminal Gly-Gly + 2-[(2R,5Z)-2-carboxy-4-methylthiazol-5(2H)-ylidene]ethyl phosphate + 2 H2O + H(+). It functions in the pathway cofactor biosynthesis; thiamine diphosphate biosynthesis. In terms of biological role, catalyzes the rearrangement of 1-deoxy-D-xylulose 5-phosphate (DXP) to produce the thiazole phosphate moiety of thiamine. Sulfur is provided by the thiocarboxylate moiety of the carrier protein ThiS. In vitro, sulfur can be provided by H(2)S. In Escherichia coli O81 (strain ED1a), this protein is Thiazole synthase.